The primary structure comprises 1091 residues: Constitutive coactivator of PPAR-gamma-like protein 2 (1091 aa).

A compositionally biased stretch (low complexity) spans 35–53 (QQQHLHRQLPPAALAPGAP). Disordered stretches follow at residues 35–105 (QQQH…HPPP), 503–575 (NCLT…SEPH), 966–1010 (SRSS…QGSS), and 1037–1077 (VEEK…KNHV). Arg57 carries the omega-N-methylarginine modification. Positions 82–95 (SRHHHPAHHFHHHG) are enriched in basic residues. Over residues 532 to 544 (GSEQITEAVQQQP) the composition is skewed to polar residues. The span at 966 to 976 (SRSSRSRGSFG) shows a compositional bias: low complexity. At Arg972 the chain carries Omega-N-methylarginine. Residues 1062–1077 (SDDHCLPVKNGEKNHV) are compositionally biased toward basic and acidic residues.

This sequence belongs to the constitutive coactivator of PPAR-gamma family.

The sequence is that of Constitutive coactivator of PPAR-gamma-like protein 2 (Fam120c) from Mus musculus (Mouse).